The primary structure comprises 377 residues: MHVLVLGAGQLARMMSLAGAPLNIQISAYDVTTGDVVHPLTLHLLGHGLEQAIEYVDVITAEFEHIPHDVLAICQASGKFLPSSEAIKAGGDRRLEKALLDHAGVRNANYYVIETREDFNKAIEHVGIPMVLKSALGGYDGKGQWRLKDAAQIETLWQEMAACIAATPTQAIVAEEFVPFQREVSLIGARGKEGQIEVYPLAENIHVNGVLSLSTAIDSPDLQEQAKHMFTAVAETLNYVGVLALEFFDVDGQLLVNEIAPRVHNSGHWTQQGAETCQFENHLRAVCGLPLGSTKLVRETSMINILGEDTLPASVMAMDGCHIHWYGKEKRAGRKMGHINVCGDYSGELQRRLCALANVLDEKAFPAVHEFAKKWQA.

Residues R93, K133, 138–144, 175–178, E183, H206, and 257–258 each bind ATP; these read GYDGKGQ, EEFV, and NE. Residues 97 to 287 form the ATP-grasp domain; it reads KALLDHAGVR…QFENHLRAVC (191 aa).

It belongs to the PurK/PurT family. Homodimer.

It carries out the reaction 5-amino-1-(5-phospho-beta-D-ribosyl)imidazole + hydrogencarbonate + ATP = 5-carboxyamino-1-(5-phospho-D-ribosyl)imidazole + ADP + phosphate + 2 H(+). It functions in the pathway purine metabolism; IMP biosynthesis via de novo pathway; 5-amino-1-(5-phospho-D-ribosyl)imidazole-4-carboxylate from 5-amino-1-(5-phospho-D-ribosyl)imidazole (N5-CAIR route): step 1/2. In terms of biological role, catalyzes the ATP-dependent conversion of 5-aminoimidazole ribonucleotide (AIR) and HCO(3)(-) to N5-carboxyaminoimidazole ribonucleotide (N5-CAIR). In Vibrio vulnificus (strain CMCP6), this protein is N5-carboxyaminoimidazole ribonucleotide synthase.